Here is a 500-residue protein sequence, read N- to C-terminus: Apolipoprotein N-acyltransferase (500 aa).

6 consecutive transmembrane segments (helical) span residues V5–V25, L38–T58, L74–I94, I111–W131, A145–V165, and L185–A205. Positions L215 to N462 constitute a CN hydrolase domain. The active-site Proton acceptor is E261. K318 is an active-site residue. C369 serves as the catalytic Nucleophile. Residues D469–W489 form a helical membrane-spanning segment.

It belongs to the CN hydrolase family. Apolipoprotein N-acyltransferase subfamily.

It localises to the cell inner membrane. It carries out the reaction N-terminal S-1,2-diacyl-sn-glyceryl-L-cysteinyl-[lipoprotein] + a glycerophospholipid = N-acyl-S-1,2-diacyl-sn-glyceryl-L-cysteinyl-[lipoprotein] + a 2-acyl-sn-glycero-3-phospholipid + H(+). Its pathway is protein modification; lipoprotein biosynthesis (N-acyl transfer). Functionally, catalyzes the phospholipid dependent N-acylation of the N-terminal cysteine of apolipoprotein, the last step in lipoprotein maturation. The protein is Apolipoprotein N-acyltransferase of Nostoc sp. (strain PCC 7120 / SAG 25.82 / UTEX 2576).